A 96-amino-acid chain; its full sequence is Conantokin Rl-C (96 aa).

Positions 1–21 (MQLYTYLYLLVPLVTFHLILG) are cleaved as a signal peptide. Positions 22-78 (TGTLDHGDALTERRSADATALKPEPVLLQKSSARSTDDNGKDTQMKRIFKKRRNKAR) are excised as a propeptide. A disordered region spans residues 36-85 (SADATALKPEPVLLQKSSARSTDDNGKDTQMKRIFKKRRNKARGEEELSE). A compositionally biased stretch (basic and acidic residues) spans 56–66 (STDDNGKDTQM). Glutamate 81 provides a ligand contact to a divalent metal cation. 4-carboxyglutamate occurs at positions 81, 82, 85, 89, and 93. The a divalent metal cation site is built by glutamate 85, glutamate 89, and glutamate 93. Asparagine 96 is subject to Asparagine amide.

Belongs to the conotoxin B superfamily. Requires Ca(2+) as cofactor. Mg(2+) is required as a cofactor. Expressed by the venom duct.

Its subcellular location is the secreted. Its function is as follows. Conantokins inhibit N-methyl-D-aspartate (NMDA) receptors. This toxin has antagonist activity on NR2B/GRIN2B (IC(50)=1.4 uM) and NR2A/GRIN2A (IC(50)=2.9 uM) subunits, when tested on rat receptors. This Conus rolani (Cone snail) protein is Conantokin Rl-C.